Consider the following 325-residue polypeptide: MQFWYSRTWITWLMLPLSFLFWLISTCRQFLFRKGIFASYRAPVPVIVVGNLSVGGNGKTPVVIWLVKQLQQKGLKVGVISRGYGSQSSVYPLLVTPDTDPIQGGDEPVLIAKRTQVPVCISANRQHAIELLLQHQPDCDLIISDDGLQHYRLQRDFEIVVLDVQRGFGNGFLLPAGPLRELPSRLNTVDLIICHGQASKYSDVEMTLVPHHAINLVTGESRLLSDFHRVSAIAGIGHPQRFFSMLENLSMQLIQTKAFQDHQTFEAAQFVDFDQTQPLLMTEKDAVKCLSFAQKNWWYVPVEAEIKGEKVRSFLAKFDEIRKTV.

53–60 (SVGGNGKT) is a binding site for ATP.

This sequence belongs to the LpxK family.

It carries out the reaction a lipid A disaccharide + ATP = a lipid IVA + ADP + H(+). Its pathway is glycolipid biosynthesis; lipid IV(A) biosynthesis; lipid IV(A) from (3R)-3-hydroxytetradecanoyl-[acyl-carrier-protein] and UDP-N-acetyl-alpha-D-glucosamine: step 6/6. Functionally, transfers the gamma-phosphate of ATP to the 4'-position of a tetraacyldisaccharide 1-phosphate intermediate (termed DS-1-P) to form tetraacyldisaccharide 1,4'-bis-phosphate (lipid IVA). The polypeptide is Tetraacyldisaccharide 4'-kinase (Pasteurella multocida (strain Pm70)).